Here is a 250-residue protein sequence, read N- to C-terminus: 2,3-bisphosphoglycerate-dependent phosphoglycerate mutase (250 aa).

Substrate-binding positions include 8-15, 21-22, Arg-60, 87-90, Lys-98, 114-115, and 183-184; these read RHGESQWN, TG, ERHY, RR, and GN. The Tele-phosphohistidine intermediate role is filled by His-9. Glu-87 acts as the Proton donor/acceptor in catalysis.

This sequence belongs to the phosphoglycerate mutase family. BPG-dependent PGAM subfamily. As to quaternary structure, homodimer.

It catalyses the reaction (2R)-2-phosphoglycerate = (2R)-3-phosphoglycerate. It participates in carbohydrate degradation; glycolysis; pyruvate from D-glyceraldehyde 3-phosphate: step 3/5. Functionally, catalyzes the interconversion of 2-phosphoglycerate and 3-phosphoglycerate. This Bordetella pertussis (strain Tohama I / ATCC BAA-589 / NCTC 13251) protein is 2,3-bisphosphoglycerate-dependent phosphoglycerate mutase.